The sequence spans 376 residues: Sulfate/thiosulfate import ATP-binding protein CysA (376 aa).

The ABC transporter domain occupies 3–237; that stretch reads IRLDNISKHF…PNSRFVFDFF (235 aa). ATP is bound at residue 35 to 42; the sequence is GPSGSGKT.

Belongs to the ABC transporter superfamily. Sulfate/tungstate importer (TC 3.A.1.6) family. As to quaternary structure, the complex is composed of two ATP-binding proteins (CysA), two transmembrane proteins (CysT and CysW) and a solute-binding protein (CysP).

It localises to the cell inner membrane. It carries out the reaction sulfate(out) + ATP + H2O = sulfate(in) + ADP + phosphate + H(+). The catalysed reaction is thiosulfate(out) + ATP + H2O = thiosulfate(in) + ADP + phosphate + H(+). Its function is as follows. Part of the ABC transporter complex CysAWTP involved in sulfate/thiosulfate import. Responsible for energy coupling to the transport system. The chain is Sulfate/thiosulfate import ATP-binding protein CysA from Vibrio cholerae serotype O1 (strain ATCC 39315 / El Tor Inaba N16961).